The primary structure comprises 199 residues: dITP/XTP pyrophosphatase (199 aa).

7-12 (SNNRGK) is a substrate binding site. Asp-68 acts as the Proton acceptor in catalysis. Residue Asp-68 coordinates Mg(2+). Residues Ala-69, 154 to 157 (FGFD), Lys-177, and 182 to 183 (HR) each bind substrate.

This sequence belongs to the HAM1 NTPase family. As to quaternary structure, homodimer. Mg(2+) is required as a cofactor.

The enzyme catalyses XTP + H2O = XMP + diphosphate + H(+). It catalyses the reaction dITP + H2O = dIMP + diphosphate + H(+). The catalysed reaction is ITP + H2O = IMP + diphosphate + H(+). Functionally, pyrophosphatase that catalyzes the hydrolysis of nucleoside triphosphates to their monophosphate derivatives, with a high preference for the non-canonical purine nucleotides XTP (xanthosine triphosphate), dITP (deoxyinosine triphosphate) and ITP. Seems to function as a house-cleaning enzyme that removes non-canonical purine nucleotides from the nucleotide pool, thus preventing their incorporation into DNA/RNA and avoiding chromosomal lesions. This Albidiferax ferrireducens (strain ATCC BAA-621 / DSM 15236 / T118) (Rhodoferax ferrireducens) protein is dITP/XTP pyrophosphatase.